The following is a 312-amino-acid chain: DNA-directed RNA polymerase subunit alpha (312 aa).

The alpha N-terminal domain (alpha-NTD) stretch occupies residues 1–226 (MIEFKKPNIT…EHFKAFESAD (226 aa)). Positions 243-312 (KEKKLEMTIE…DLGLSLRQED (70 aa)) are alpha C-terminal domain (alpha-CTD).

Belongs to the RNA polymerase alpha chain family. Homodimer. The RNAP catalytic core consists of 2 alpha, 1 beta, 1 beta' and 1 omega subunit. When a sigma factor is associated with the core the holoenzyme is formed, which can initiate transcription.

It catalyses the reaction RNA(n) + a ribonucleoside 5'-triphosphate = RNA(n+1) + diphosphate. DNA-dependent RNA polymerase catalyzes the transcription of DNA into RNA using the four ribonucleoside triphosphates as substrates. The sequence is that of DNA-directed RNA polymerase subunit alpha from Lactobacillus delbrueckii subsp. bulgaricus (strain ATCC 11842 / DSM 20081 / BCRC 10696 / JCM 1002 / NBRC 13953 / NCIMB 11778 / NCTC 12712 / WDCM 00102 / Lb 14).